The sequence spans 393 residues: ATP phosphoribosyltransferase regulatory subunit (393 aa).

The protein belongs to the class-II aminoacyl-tRNA synthetase family. HisZ subfamily. In terms of assembly, heteromultimer composed of HisG and HisZ subunits.

The protein localises to the cytoplasm. The protein operates within amino-acid biosynthesis; L-histidine biosynthesis; L-histidine from 5-phospho-alpha-D-ribose 1-diphosphate: step 1/9. Its function is as follows. Required for the first step of histidine biosynthesis. May allow the feedback regulation of ATP phosphoribosyltransferase activity by histidine. The polypeptide is ATP phosphoribosyltransferase regulatory subunit (Nitrosospira multiformis (strain ATCC 25196 / NCIMB 11849 / C 71)).